The sequence spans 778 residues: MSKRKLIPKLSIQSPVLHTNLNVQSTHPPLKKEDLHRISKDSLESDSESLTQEIMCHSEFDDRIRGNGMEPDSLDEEESPRWGSLHEMEEEASGKAAQMAREQNHHTWDQGANNRQQPIEDKYSDLRYDPNWKSKKEEGQLLSVEALPESTDSSLENLPLAPLYPSQETSMELSGGKGEQKESPQSAASLLGSEFLSPNYEHGARRSKPFSELSDSDLEEKSSSLSPYVKSSSSHNEVFLPGSRGPRRRKSKQHFVEKNKLTLGLPTPKTDSYLQLHNKKRGESHPEQISYPVRVTDKTSIQNAKEMENAAIDPEDKWHQRAQQLKNYQEHWSQYESTKSSNVPRGQPSDMVNDHQPSRRPAKLKIRKQCKHQNGLKSSTTEEVTASQGNQNNPPRQQQNQNKPLDTSTKPESIVIMHASNNDVQASRALRSHNLKETSNTFAPPKQAFDKVLSKNSTGCDSGLNVNKERGHKDQEEKRFSYQQLHTLSDMDLNNLNELSKRHVLLSQKGSQFVYHINTHGSTKNKKQLKQPYTETKYRNLEMLWKFHSSSDSQTVRASPDSWLTQIMEQHQQALVQLTDVQPSEGALSSVTLPPILSRVESESQLSSERSQRNQVKISRSNSEGYLFQLEKGKKHKKRSSSKNTKLKGYQKRDVKLGGLGPDFESIRDKTQKLIQQKEYAKQVKEYNMKTLSILSKPQTEKTQKKSAIPRQKALEYAKTIPKPKPSNLTHQASKEQKNPTYAGKEESLPEISLLEILQNRHEREKQAVAAFKVLHIV.

4 disordered regions span residues 62-271 (DRIR…PKTD), 334-408 (QYES…LDTS), 631-654 (EKGK…QKRD), and 721-746 (IPKP…AGKE). Residues 118–139 (PIEDKYSDLRYDPNWKSKKEEG) are compositionally biased toward basic and acidic residues. Over residues 223 to 234 (SSLSPYVKSSSS) the composition is skewed to low complexity. Residues 334-344 (QYESTKSSNVP) show a composition bias toward polar residues. Basic residues predominate over residues 358–371 (SRRPAKLKIRKQCK). Residues 375 to 389 (GLKSSTTEEVTASQG) are compositionally biased toward polar residues. Residues 390–402 (NQNNPPRQQQNQN) are compositionally biased toward low complexity. Residues 633 to 650 (GKKHKKRSSSKNTKLKGY) show a composition bias toward basic residues. Residues 733 to 746 (ASKEQKNPTYAGKE) are compositionally biased toward basic and acidic residues.

Required for the normal development of cilia in brain ependymal cells lining the ventricular surfaces. The protein is Jhy protein homolog of Homo sapiens (Human).